Here is a 569-residue protein sequence, read N- to C-terminus: uncharacterized protein (569 aa).

An N-terminal signal peptide occupies residues 1–24; sequence MKFQRKYWGLLSTLGVSSAVALSA. C25 is lipidated: N-palmitoyl cysteine. C25 carries S-diacylglycerol cysteine lipidation. Disordered stretches follow at residues 111-137 and 242-267; these read SNMKTASVSSSSSSTGNNGSTEDEWEV and GKNGTQVKKMTTDSSSTQQSEEKKIE. 2 stretches are compositionally biased toward low complexity: residues 119–130 and 249–260; these read SSSSSSTGNNGS and KKMTTDSSSTQQ.

This sequence to M.pneumoniae MPN_456 and M.genitalium MG321 N-terminal region.

Its subcellular location is the cell membrane. This is an uncharacterized protein from Mycoplasma pneumoniae (strain ATCC 29342 / M129 / Subtype 1) (Mycoplasmoides pneumoniae).